A 102-amino-acid polypeptide reads, in one-letter code: Protein RnfH (102 aa).

This sequence belongs to the UPF0125 (RnfH) family.

This is Protein RnfH from Haemophilus influenzae (strain 86-028NP).